The sequence spans 542 residues: Tripartite motif-containing protein 26 (542 aa).

The RING-type zinc finger occupies 16-57 (CSICLDYLRDPVTIDCGHVFCRSCTSDIRPISGNRPVCPLCK). The B box-type zinc-finger motif lies at 97–138 (QDMKLCERHQEKLHYYCEDDGKLLCVMCRESREHRPHTAVLV). Positions 102, 105, 124, and 130 each coordinate Zn(2+). Residues 197-243 (QFLKKREQHLLDQLATLEQLLTEGREKFKTRGVSELDRLTLVISELE) are a coiled coil. Residues 298–542 (RGLRQFQGKL…WPEARLLLRP (245 aa)) form the B30.2/SPRY domain. A disordered region spans residues 379–440 (REGWSEDEEE…EEEEEVQESC (62 aa)). Composition is skewed to acidic residues over residues 383-405 (SEDE…EEPG) and 413-437 (WETD…EEVQ). Residues 411 to 440 (EDWETDEEDESLGEEEEEEEEEEEEVQESC) adopt a coiled-coil conformation.

It belongs to the TRIM/RBCC family. In terms of assembly, interacts with TBK1; this interaction bridges together TBK1 and NEMO in order to activate TBK1. Interacts with INCA1. Autoubiquitinates upon viral infection. In turn, autoubiquitinated TRIM26 recruits NEMO and bridges TBK1-NEMO interaction.

It localises to the cytoplasm. Its subcellular location is the nucleus. It carries out the reaction S-ubiquitinyl-[E2 ubiquitin-conjugating enzyme]-L-cysteine + [acceptor protein]-L-lysine = [E2 ubiquitin-conjugating enzyme]-L-cysteine + N(6)-ubiquitinyl-[acceptor protein]-L-lysine.. E3 ubiquitin-protein ligase which regulates the IFN-beta production and antiviral response downstream of various DNA-encoded pattern-recognition receptors (PRRs). Also plays a central role in determining the response to different forms of oxidative stress by controlling levels of DNA glycosylases NEIL1, NEIL3 and NTH1 that are involved in repair of damaged DNA. Promotes nuclear IRF3 ubiquitination and proteasomal degradation. Bridges together TBK1 and NEMO during the innate response to viral infection leading to the activation of TBK1. Positively regulates LPS-mediated inflammatory innate immune response by catalyzing the 'Lys-11'-linked polyubiquitination of TAB1 to enhance its activation and subsequent NF-kappa-B and MAPK signaling. In a manner independent of its catalytic activity, inhibits WWP2, a SOX2-directed E3 ubiquitin ligase, and thus protects SOX2 from polyubiquitination and proteasomal degradation. Ubiquitinates the histone acetyltransferase protein complex component PHF20 and thereby triggers its degradation in the nucleus after its recruitment by the histone demethylase KDM6B, serving as a scaffold protein. Upon induction by TGF-beta, ubiquitinates the TFIID component TAF7 for proteasomal degradation. Induces ferroptosis by ubiquitinating SLC7A11, a critical protein for lipid reactive oxygen species (ROS) scavenging. The chain is Tripartite motif-containing protein 26 (Trim26) from Rattus norvegicus (Rat).